The chain runs to 91 residues: Small ribosomal subunit protein bS20 (91 aa).

It belongs to the bacterial ribosomal protein bS20 family.

Functionally, binds directly to 16S ribosomal RNA. This chain is Small ribosomal subunit protein bS20, found in Acidithiobacillus ferrooxidans (strain ATCC 23270 / DSM 14882 / CIP 104768 / NCIMB 8455) (Ferrobacillus ferrooxidans (strain ATCC 23270)).